The sequence spans 496 residues: Fatty acyl-CoA reductase 8 (496 aa).

This sequence belongs to the fatty acyl-CoA reductase family.

The catalysed reaction is a long-chain fatty acyl-CoA + 2 NADPH + 2 H(+) = a long-chain primary fatty alcohol + 2 NADP(+) + CoA. Its function is as follows. Catalyzes the reduction of fatty acyl-CoA to fatty alcohols. Catalyzes specifically the formation of C16:0 fatty alcohol. This Arabidopsis thaliana (Mouse-ear cress) protein is Fatty acyl-CoA reductase 8 (FAR8).